Here is a 357-residue protein sequence, read N- to C-terminus: Glutamine synthetase root isozyme 1 (357 aa).

In terms of domain architecture, GS beta-grasp spans 19–99; sequence IIAEYIWIGG…VMCDCYTPQG (81 aa). Residues 106–357 form the GS catalytic domain; it reads KRYSAAKVFS…AETTILWNGN (252 aa).

The protein belongs to the glutamine synthetase family. Homooctamer. In terms of tissue distribution, found mainly in the cortical tissues of seedling roots, and in the root tip.

It is found in the cytoplasm. The enzyme catalyses L-glutamate + NH4(+) + ATP = L-glutamine + ADP + phosphate + H(+). Its function is as follows. Plays a role in the flow of nitrogen into nitrogenous organic compounds. This chain is Glutamine synthetase root isozyme 1 (GLN6), found in Zea mays (Maize).